Here is a 209-residue protein sequence, read N- to C-terminus: Vacuolar protein sorting-associated protein 28 homolog 1 (209 aa).

The region spanning 1-99 (MEVKLWNDKR…TSGVPATVEH (99 aa)) is the VPS28 N-terminal domain. Residues 109–205 (SSASVVAECV…SYNSFMAALP (97 aa)) enclose the VPS28 C-terminal domain.

This sequence belongs to the VPS28 family. As to quaternary structure, component of the endosomal sorting required for transport complex I (ESCRT-I), composed of ELC, VPS28 and VPS37. Interacts with ELC.

The protein localises to the endosome. Functionally, component of the ESCRT-I complex (endosomal sorting complex required for transport I), a regulator of vesicular trafficking process. Required for the sorting of endocytic ubiquitinated cargos into multivesicular bodies (MVBs). Mediates the association to the ESCRT-0 complex. This is Vacuolar protein sorting-associated protein 28 homolog 1 (VPS28-1) from Arabidopsis thaliana (Mouse-ear cress).